A 248-amino-acid chain; its full sequence is Anamorsin homolog (248 aa).

The tract at residues 4-129 is N-terminal SAM-like domain; it reads FKGLQKSLYI…ETGSSARLSF (126 aa). The tract at residues 130-161 is linker; it reads AKKNASAVNVWKISGDDEELIDEEELLDEEDK. [2Fe-2S] cluster is bound by residues C172, C181, C184, and C186. The segment at 172 to 186 is fe-S binding site A; it reads CSTTGKRKACKNCSC. Residues C209, C212, C220, and C223 each contribute to the [4Fe-4S] cluster site. 2 consecutive short sequence motifs (cx2C motif) follow at residues 209-212 and 220-223; these read CGNC and CSTC. Residues 209-223 are fe-S binding site B; sequence CGNCYLGDAFRCSTC.

Belongs to the anamorsin family. In terms of assembly, monomer. The cofactor is [2Fe-2S] cluster. Requires [4Fe-4S] cluster as cofactor.

The protein resides in the cytoplasm. Its subcellular location is the mitochondrion intermembrane space. Its function is as follows. Component of the cytosolic iron-sulfur (Fe-S) protein assembly (CIA) machinery. Required for the maturation of extramitochondrial Fe-S proteins. Part of an electron transfer chain functioning in an early step of cytosolic Fe-S biogenesis, facilitating the de novo assembly of a [4Fe-4S] cluster on the cytosolic Fe-S scaffold complex. Electrons are transferred from NADPH via a FAD- and FMN-containing diflavin oxidoreductase. Together with the diflavin oxidoreductase, also required for the assembly of the diferric tyrosyl radical cofactor of ribonucleotide reductase (RNR), probably by providing electrons for reduction during radical cofactor maturation in the catalytic small subunit. The chain is Anamorsin homolog from Drosophila melanogaster (Fruit fly).